The chain runs to 715 residues: Targeting protein for Xklp2-B (715 aa).

The interval 36 to 167 (NAENIPPDQK…LTMPATPTVL (132 aa)) is disordered. Over residues 47-56 (LSETSVNAEQ) the composition is skewed to polar residues. Positions 85–103 (QTKRSARRMSKKHRQKILL) are enriched in basic residues. The segment covering 104–115 (KMKETHLEKETA) has biased composition (basic and acidic residues). Over residues 141–152 (QPTSSHHGTTSP) the composition is skewed to polar residues. Serine 204 is subject to Phosphoserine; by plk1. 2 disordered regions span residues 260-291 (PPTSPVQVTKGGHTVPKPFNLSKGKRKHEEAS) and 314-337 (RSRQKEMEGPSPVKMLKPKLTNPK).

It belongs to the TPX2 family. Associates with microtubules. Interacts with aurka and plk1. Interacts with kif15. Phosphorylated during mitosis. Hyperphosphorylated upon assembly of microtubules.

Its subcellular location is the nucleus. The protein localises to the cytoplasm. The protein resides in the cytoskeleton. It localises to the spindle. It is found in the spindle pole. Functionally, spindle assembly factor. Required for normal assembly of mitotic spindles. Mediates the binding kif15 and aurka to spindle microtubules. Required for targeting kif15 to microtubule minus ends. Activates aurka by promoting its autophosphorylation and protects the phosphorylated residue against dephosphorylation. The chain is Targeting protein for Xklp2-B (tpx2-b) from Xenopus laevis (African clawed frog).